The following is a 1001-amino-acid chain: X-linked retinitis pigmentosa GTPase regulator (1001 aa).

6 RCC1 repeats span residues 54 to 105 (NKLY…STDT), 106 to 158 (GGVY…LTED), 159 to 208 (GKLF…VTMD), 209 to 261 (GELY…LTEK), 262 to 313 (VVYA…MTEL), and 314 to 367 (GLLY…FATP). The tract at residues 404–428 (SLSARLRRRERERPPCSASMVGTLP) is disordered. Ser-518 carries the post-translational modification Phosphoserine. Composition is skewed to basic and acidic residues over residues 631–641 (KKIRESEENSK) and 659–671 (EDNK…RRSS). Disordered stretches follow at residues 631–738 (KKIR…WYDR), 794–869 (NLEF…EGSE), 902–925 (PKGH…DPTS), and 962–1001 (GDQI…CTIL). Acidic residues-rich tracts occupy residues 679–691 (SETE…DSYM) and 717–731 (EKDE…EVET). 3 stretches are compositionally biased toward basic and acidic residues: residues 794–818 (NLEF…EKEA), 847–857 (EERKEGEKEIV), and 902–911 (PKGHMYDRVK). Polar residues predominate over residues 976–1001 (QNHMGQNLQDSTTPNMEGKSKSCTIL). A Cysteine methyl ester modification is found at Cys-998. Residue Cys-998 is the site of S-geranylgeranyl cysteine attachment. Positions 999–1001 (TIL) are cleaved as a propeptide — removed in mature form.

As to quaternary structure, interacts with SPATA7. Interacts with PDE6D. Interacts with RPGRIP1 and RPGRIP1L; PDE6D, RPGRIP1 and RPGRIP1L may compete for the same binding sites. Interacts with NPM1. Interacts with PDE6D. Isoform 5 interacts (via N-terminus) with SMC1A and SMC3. Isoform 5 interacts with CEP290. Interacts with WHRN. Interacts with RAB37 and RAB8A (in GDP-bound forms); functions as GEF for RAB37 and RAB8A. In terms of processing, prenylated. In terms of tissue distribution, expressed in the retina (at protein level). Located mainly in the connecting cilia between the outer segment and inner segment and also observed in the outer plexiform layer, inner plexiform layer, and ganglion cell layer of the retinas. Isoform 1: Expressed in the retina (at protein level). Isoform 5: Expressed in the retina (at protein level). Expressed in the brain. Expressed in the testis (at protein level). Expressed in kidney (at protein level).

It is found in the golgi apparatus. Its subcellular location is the cytoplasm. The protein resides in the cytoskeleton. The protein localises to the microtubule organizing center. It localises to the centrosome. It is found in the cell projection. Its subcellular location is the cilium. The protein resides in the cilium basal body. The protein localises to the cilium axoneme. It localises to the flagellum axoneme. Functionally, acts as a guanine-nucleotide releasing factor (GEF) for RAB8A and RAB37 by promoting the conversion of inactive RAB-GDP to the active form RAB-GTP. GEF activity towards RAB8A may facilitate ciliary trafficking by modulating ciliary intracellular localization of RAB8A. GEF activity towards RAB37 maintains autophagic homeostasis and retinal function. Involved in photoreceptor integrity. May control cilia formation by regulating actin stress filaments and cell contractility. May be involved in microtubule organization and regulation of transport in primary cilia. Its function is as follows. Isoform 5 may play a critical role in spermatogenesis and in intraflagellar transport processes. This Mus musculus (Mouse) protein is X-linked retinitis pigmentosa GTPase regulator.